Here is a 347-residue protein sequence, read N- to C-terminus: GTPase Obg (347 aa).

The Obg domain maps to 1–159 (MQFLDQAKIY…AWVWLRLKLL (159 aa)). The segment at 124-144 (GRGNASYKSSTNRAPRQHGPG) is disordered. One can recognise an OBG-type G domain in the interval 160–327 (ADVGLVGLPN…ILDQLITMTG (168 aa)). GTP-binding positions include 166–173 (GLPNAGKS), 191–195 (FTTLH), 212–215 (DIPG), 279–282 (NKID), and 308–310 (SGA). Serine 173 and threonine 193 together coordinate Mg(2+).

Belongs to the TRAFAC class OBG-HflX-like GTPase superfamily. OBG GTPase family. Monomer. The cofactor is Mg(2+).

The protein localises to the cytoplasm. Its function is as follows. An essential GTPase which binds GTP, GDP and possibly (p)ppGpp with moderate affinity, with high nucleotide exchange rates and a fairly low GTP hydrolysis rate. Plays a role in control of the cell cycle, stress response, ribosome biogenesis and in those bacteria that undergo differentiation, in morphogenesis control. The chain is GTPase Obg from Zymomonas mobilis subsp. mobilis (strain ATCC 31821 / ZM4 / CP4).